We begin with the raw amino-acid sequence, 806 residues long: Glycerol-3-phosphate acyltransferase (806 aa).

The HXXXXD motif motif lies at 305–310; the sequence is CHRSHM.

It belongs to the GPAT/DAPAT family.

The protein resides in the cell inner membrane. It catalyses the reaction sn-glycerol 3-phosphate + an acyl-CoA = a 1-acyl-sn-glycero-3-phosphate + CoA. It participates in phospholipid metabolism; CDP-diacylglycerol biosynthesis; CDP-diacylglycerol from sn-glycerol 3-phosphate: step 1/3. This chain is Glycerol-3-phosphate acyltransferase, found in Escherichia fergusonii (strain ATCC 35469 / DSM 13698 / CCUG 18766 / IAM 14443 / JCM 21226 / LMG 7866 / NBRC 102419 / NCTC 12128 / CDC 0568-73).